A 232-amino-acid polypeptide reads, in one-letter code: Zinc-finger homeodomain protein 5 (232 aa).

Acidic residues predominate over residues 1–11 (MELSEHEEDAG). Residues 1–25 (MELSEHEEDAGDVGGGCSSPPTPPH) form a disordered region. Residues 40 to 86 (YHECLRNHAAASGGHVVDGCGEFMPASTEEPLACAACGCHRSFHRRD) form a ZF-HD dimerization-type; degenerate zinc finger. The tract at residues 126-170 (GLPFPGYGTPSGGTGTTTASSSDERLRPSPVQPRRRSRTTFTREQ) is disordered. Residues 159–222 (RRRSRTTFTR…NNKHSFKQKQ (64 aa)) constitute a DNA-binding region (homeobox).

In terms of assembly, homo- and heterodimer with other ZFHD proteins.

The protein resides in the nucleus. Its function is as follows. Putative transcription factor. This Oryza sativa subsp. indica (Rice) protein is Zinc-finger homeodomain protein 5 (ZHD5).